Here is a 293-residue protein sequence, read N- to C-terminus: Proline iminopeptidase (293 aa).

The 250-residue stretch at lysine 28–glutamate 277 folds into the AB hydrolase-1 domain. Serine 104 serves as the catalytic Nucleophile. Residue aspartate 244 is part of the active site. Histidine 271 serves as the catalytic Proton donor.

It belongs to the peptidase S33 family.

The enzyme catalyses Release of N-terminal proline from a peptide.. In terms of biological role, releases the N-terminal proline from various substrates. This Clostridium botulinum (strain Hall / ATCC 3502 / NCTC 13319 / Type A) protein is Proline iminopeptidase.